The chain runs to 364 residues: Chorismate synthase (364 aa).

Arg-47 contributes to the NADP(+) binding site. FMN is bound by residues 124 to 126 (RAS), Gly-287, 302 to 306 (KPTAT), and Arg-328.

Belongs to the chorismate synthase family. As to quaternary structure, homotetramer. It depends on FMNH2 as a cofactor.

It carries out the reaction 5-O-(1-carboxyvinyl)-3-phosphoshikimate = chorismate + phosphate. It participates in metabolic intermediate biosynthesis; chorismate biosynthesis; chorismate from D-erythrose 4-phosphate and phosphoenolpyruvate: step 7/7. In terms of biological role, catalyzes the anti-1,4-elimination of the C-3 phosphate and the C-6 proR hydrogen from 5-enolpyruvylshikimate-3-phosphate (EPSP) to yield chorismate, which is the branch point compound that serves as the starting substrate for the three terminal pathways of aromatic amino acid biosynthesis. This reaction introduces a second double bond into the aromatic ring system. In Prochlorococcus marinus (strain MIT 9515), this protein is Chorismate synthase.